The primary structure comprises 151 residues: Transcriptional repressor NrdR (151 aa).

Positions 1–21 (MRCPFCGEADTQVKDSRPTED) are disordered. A zinc finger lies at 3–34 (CPFCGEADTQVKDSRPTEDGAAIRRRRFCPQC). Positions 11–21 (TQVKDSRPTED) are enriched in basic and acidic residues. In terms of domain architecture, ATP-cone spans 49–139 (LVVVKADQRR…VYRDFREAKD (91 aa)).

It belongs to the NrdR family. The cofactor is Zn(2+).

In terms of biological role, negatively regulates transcription of bacterial ribonucleotide reductase nrd genes and operons by binding to NrdR-boxes. The sequence is that of Transcriptional repressor NrdR from Acidiphilium cryptum (strain JF-5).